The primary structure comprises 44 residues: Photosystem I reaction center subunit IX (44 aa).

A helical membrane pass occupies residues 7 to 27 (YLSTAPVLATLWFGSLAGLLI).

The protein belongs to the PsaJ family.

The protein localises to the plastid. It localises to the chloroplast thylakoid membrane. Its function is as follows. May help in the organization of the PsaE and PsaF subunits. This Calycanthus floridus var. glaucus (Eastern sweetshrub) protein is Photosystem I reaction center subunit IX.